A 311-amino-acid polypeptide reads, in one-letter code: HPr kinase/phosphorylase (311 aa).

Residues H139 and K160 contribute to the active site. ATP is bound at residue 154–161 (GESGVGKS). S161 serves as a coordination point for Mg(2+). Residue D178 is the Proton acceptor; for phosphorylation activity. Proton donor; for dephosphorylation activity of the active site. An important for the catalytic mechanism of both phosphorylation and dephosphorylation region spans residues 202 to 211 (IEIRGIGILD). E203 lines the Mg(2+) pocket. R244 is an active-site residue. Residues 265 to 270 (PVRPGR) are important for the catalytic mechanism of dephosphorylation.

It belongs to the HPrK/P family. As to quaternary structure, homohexamer. Mg(2+) serves as cofactor.

The catalysed reaction is [HPr protein]-L-serine + ATP = [HPr protein]-O-phospho-L-serine + ADP + H(+). The enzyme catalyses [HPr protein]-O-phospho-L-serine + phosphate + H(+) = [HPr protein]-L-serine + diphosphate. Its function is as follows. Catalyzes the ATP- as well as the pyrophosphate-dependent phosphorylation of a specific serine residue in HPr, a phosphocarrier protein of the phosphoenolpyruvate-dependent sugar phosphotransferase system (PTS). HprK/P also catalyzes the pyrophosphate-producing, inorganic phosphate-dependent dephosphorylation (phosphorolysis) of seryl-phosphorylated HPr (P-Ser-HPr). The two antagonistic activities of HprK/P are regulated by several intracellular metabolites, which change their concentration in response to the absence or presence of rapidly metabolisable carbon sources (glucose, fructose, etc.) in the growth medium. Therefore, by controlling the phosphorylation state of HPr, HPrK/P is a sensor enzyme that plays a major role in the regulation of carbon metabolism and sugar transport: it mediates carbon catabolite repression (CCR), and regulates PTS-catalyzed carbohydrate uptake and inducer exclusion. The polypeptide is HPr kinase/phosphorylase (Caldicellulosiruptor bescii (strain ATCC BAA-1888 / DSM 6725 / KCTC 15123 / Z-1320) (Anaerocellum thermophilum)).